We begin with the raw amino-acid sequence, 204 residues long: Thymidine kinase (204 aa).

Residues 18–25 (GSMFSGKT) and 91–94 (DEGQ) contribute to the ATP site. Glutamate 92 serves as the catalytic Proton acceptor. Zn(2+)-binding residues include cysteine 148, cysteine 151, cysteine 180, and histidine 183.

The protein belongs to the thymidine kinase family. In terms of assembly, homotetramer.

It localises to the cytoplasm. The catalysed reaction is thymidine + ATP = dTMP + ADP + H(+). The sequence is that of Thymidine kinase from Bdellovibrio bacteriovorus (strain ATCC 15356 / DSM 50701 / NCIMB 9529 / HD100).